Reading from the N-terminus, the 364-residue chain is MKRTPLFEKHVGLGAKMVDFAGWEMPLYYTSIFEEVMAVRKSVGMFDVSHMGEFLVKGPEAVSFIDFLITNDFSSLPDGKAIYSVMCNENGGIIDDLVVYKVSPDEALMVVNAANIEKDFNWIKSHSKNFDVEILNISDTTALIAFQGPEAQETLQELVEDSLEEIAYYSFRKSIVAGVEALVSRTGYTGEDGFELMLEAKDAPKVWDALMNLLRKIDGRPAGLGARDVCRLEATYLLYGQDMDESTNPLEVGLSWVVKLDKDFVGKEALLKAKEKVERKLVALELSGKRIARKGYEVLKNGERVGEITSGNFSPTLGKSIALALVSKSVKVGDQLEVAFPGGKLVEALVVKKPFYRGSVRREV.

It belongs to the GcvT family. In terms of assembly, the glycine cleavage system is composed of four proteins: P, T, L and H.

It carries out the reaction N(6)-[(R)-S(8)-aminomethyldihydrolipoyl]-L-lysyl-[protein] + (6S)-5,6,7,8-tetrahydrofolate = N(6)-[(R)-dihydrolipoyl]-L-lysyl-[protein] + (6R)-5,10-methylene-5,6,7,8-tetrahydrofolate + NH4(+). The glycine cleavage system catalyzes the degradation of glycine. The sequence is that of Aminomethyltransferase from Thermotoga petrophila (strain ATCC BAA-488 / DSM 13995 / JCM 10881 / RKU-1).